Reading from the N-terminus, the 812-residue chain is Mitochondrial intermediate peptidase (812 aa).

Residues 1–29 (MRLSRQLLRSTPFLTRAKPVSGKVSHFRS) constitute a mitochondrion transit peptide. The interval 19 to 49 (PVSGKVSHFRSRTDLKGGSSNSSKSPDSVGD) is disordered. The segment covering 37–46 (SSNSSKSPDS) has biased composition (low complexity). Zn(2+) is bound at residue His-595. Residue Glu-596 is part of the active site. Residues His-599 and His-602 each coordinate Zn(2+).

It belongs to the peptidase M3 family. It depends on Zn(2+) as a cofactor.

The protein localises to the mitochondrion matrix. The catalysed reaction is Release of an N-terminal octapeptide as second stage of processing of some proteins imported into the mitochondrion.. Its function is as follows. Cleaves proteins, imported into the mitochondrion, to their mature size. While most mitochondrial precursor proteins are processed to the mature form in one step by mitochondrial processing peptidase (MPP), the sequential cleavage by MIP of an octapeptide after initial processing by MPP is a required step for a subgroup of nuclear-encoded precursor proteins destined for the matrix or the inner membrane. This is Mitochondrial intermediate peptidase (OCT1) from Scheffersomyces stipitis (strain ATCC 58785 / CBS 6054 / NBRC 10063 / NRRL Y-11545) (Yeast).